We begin with the raw amino-acid sequence, 285 residues long: NADPH-dependent 7-cyano-7-deazaguanine reductase (285 aa).

Position 91-93 (91-93 (IES)) interacts with substrate. NADPH is bound at residue 93-94 (SK). Cys-191 (thioimide intermediate) is an active-site residue. The active-site Proton donor is the Asp-198. 230–231 (HE) contacts substrate. Residue 259–260 (RG) participates in NADPH binding.

This sequence belongs to the GTP cyclohydrolase I family. QueF type 2 subfamily. In terms of assembly, homodimer.

The protein resides in the cytoplasm. The catalysed reaction is 7-aminomethyl-7-carbaguanine + 2 NADP(+) = 7-cyano-7-deazaguanine + 2 NADPH + 3 H(+). It participates in tRNA modification; tRNA-queuosine biosynthesis. Its function is as follows. Catalyzes the NADPH-dependent reduction of 7-cyano-7-deazaguanine (preQ0) to 7-aminomethyl-7-deazaguanine (preQ1). In Legionella pneumophila (strain Lens), this protein is NADPH-dependent 7-cyano-7-deazaguanine reductase.